Here is a 227-residue protein sequence, read N- to C-terminus: MKVTYHGHSVITVETKDHHIIFDPFLTGNSLTDIKPEDVKADVILLTHGHNDHVGDTEQIAKQNNALVIAPNELAVYLGWKGLNVHPMHIGGSRQFDFGKVKLTQAFHGSAITDEENKTITYTGMPAGILLTVEDKTIFHAGDTALFSDMKLIGELNHIDLAFLPIGDNFTMGPEDAKLAAEWLRAKQVVPVHYNTFPVIEQDPEAFADSLPGGVGKVMSVGETIEL.

This sequence belongs to the UPF0173 family.

This is UPF0173 metal-dependent hydrolase YtkL (ytkL) from Bacillus subtilis (strain 168).